The primary structure comprises 132 residues: Small ribosomal subunit protein uS8 (132 aa).

The protein belongs to the universal ribosomal protein uS8 family. As to quaternary structure, part of the 30S ribosomal subunit. Contacts proteins S5 and S12.

One of the primary rRNA binding proteins, it binds directly to 16S rRNA central domain where it helps coordinate assembly of the platform of the 30S subunit. This is Small ribosomal subunit protein uS8 from Brucella melitensis biotype 1 (strain ATCC 23456 / CCUG 17765 / NCTC 10094 / 16M).